Reading from the N-terminus, the 568-residue chain is Urease subunit alpha (568 aa).

Positions glycine 132–phenylalanine 568 constitute a Urease domain. Ni(2+)-binding residues include histidine 137, histidine 139, and lysine 219. Lysine 219 bears the N6-carboxylysine mark. Histidine 221 is a binding site for substrate. 2 residues coordinate Ni(2+): histidine 248 and histidine 274. Histidine 322 (proton donor) is an active-site residue. Aspartate 362 provides a ligand contact to Ni(2+).

It belongs to the metallo-dependent hydrolases superfamily. Urease alpha subunit family. Heterotrimer of UreA (gamma), UreB (beta) and UreC (alpha) subunits. Three heterotrimers associate to form the active enzyme. The cofactor is Ni cation. In terms of processing, carboxylation allows a single lysine to coordinate two nickel ions.

Its subcellular location is the cytoplasm. It catalyses the reaction urea + 2 H2O + H(+) = hydrogencarbonate + 2 NH4(+). The protein operates within nitrogen metabolism; urea degradation; CO(2) and NH(3) from urea (urease route): step 1/1. The sequence is that of Urease subunit alpha from Azobacteroides pseudotrichonymphae genomovar. CFP2.